A 1844-amino-acid polypeptide reads, in one-letter code: ATPase family AAA domain-containing protein 5 (1844 aa).

Position 44 is a phosphoserine (Ser-44). A Glycyl lysine isopeptide (Lys-Gly) (interchain with G-Cter in SUMO2) cross-link involves residue Lys-127. Residues 178–199 (QPNTMTSLQNSKKVNPKQGTTK) show a composition bias toward polar residues. Residues 178 to 204 (QPNTMTSLQNSKKVNPKQGTTKNDFKK) form a disordered region. Ser-219, Ser-306, Ser-311, Ser-354, and Ser-369 each carry phosphoserine. Residues 368-384 (KSNVVIQEEELELAVLE) form an interaction with WDR48 region. 3 disordered regions span residues 477–499 (KLKKKNKKTLDTGAIPGKNREGN), 580–623 (ESEA…NSQL), and 658–700 (KFTR…SKNI). 2 stretches are compositionally biased toward polar residues: residues 580–592 (ESEASLLNVSTPK) and 599–608 (RISSTPTTET). Ser-602, Ser-614, and Ser-621 each carry phosphoserine. Positions 664 to 673 (TPKKSKKKSN) are enriched in basic residues. A compositionally biased stretch (polar residues) spans 685-700 (GFTSQIRKASNTSKNI). Phosphoserine is present on Ser-817. Basic and acidic residues-rich tracts occupy residues 987-1032 (LEAD…ELSK) and 1092-1106 (RQNLKGKRDEKHEDF). 2 disordered regions span residues 987-1047 (LEAD…SKDS) and 1092-1118 (RQNLKGKRDEKHEDFSGGIDFKGSSDD). At Ser-1116 the chain carries Phosphoserine. 1132-1139 (GPTGVGKT) provides a ligand contact to ATP. Disordered regions lie at residues 1203–1235 (KKISSPKKVVTSPRKVPPPSPKSSGPKRALPPK) and 1272–1292 (ITQTKSTNATNSNVKDVGAEE). The span at 1272-1285 (ITQTKSTNATNSNV) shows a compositional bias: polar residues. An LXCXE motif motif is present at residues 1428 to 1432 (LVCSE). Residues 1591-1635 (SLSSVSSSSNAEESKTGDEESKARDKGNNPETKKSIPCPPKTTAG) are disordered. Residues 1602–1624 (EESKTGDEESKARDKGNNPETKK) are compositionally biased toward basic and acidic residues. Residues 1630–1719 (PKTTAGKKCS…AAAEALSFTK (90 aa)) form an interaction with RAD51 and RFC5 region.

Belongs to the AAA ATPase family. In terms of assembly, component of a heteropentameric replication factor ATAD5 RFC-like complex composed of one large subunit (ATAD5) and four small subunits (RFC2, RFC3, RFC4 and RFC5). Within the ATAD5 RFC-like complex, interacts with RFC2, RFC4 and RFC5. Within the ATAD5 RFC-like complex, interacts directly via-N terminal with RAD51; the interactions is enhanced under replication stress. Interacts with RB1 predominantly in G1 phase via its LXCXE motif. Interacts with RAD9A in growing cells. The interaction with RAD9A is reduced after exposure to DNA replication-inhibiting agents. Interacts with BRD4. Interacts with PCNA. Interacts with deubiquitinating enzyme USP1, and its associated factor, WDR48. Post-translationally, ATR may stimulate the RAD9A dissociation.

It is found in the nucleus. In terms of biological role, has an important role in DNA replication and in maintaining genome integrity during replication stress. Involved in a RAD9A-related damage checkpoint, a pathway that is important in determining whether DNA damage is compatible with cell survival or whether it requires cell elimination by apoptosis. Modulates the RAD9A interaction with BCL2 and thereby induces DNA damage-induced apoptosis. Promotes PCNA deubiquitination by recruiting the ubiquitin-specific protease 1 (USP1) and WDR48 thereby down-regulating the error-prone damage bypass pathway. As component of the ATAD5 RFC-like complex, regulates the function of the DNA polymerase processivity factor PCNA by unloading the ring-shaped PCNA homotrimer from DNA after replication during the S phase of the cell cycle. This seems to be dependent on its ATPase activity. Plays important roles in restarting stalled replication forks under replication stress, by unloading the PCNA homotrimer from DNA and recruiting RAD51 possibly through an ATR-dependent manner. Ultimately this enables replication fork regression, breakage, and eventual fork restart. Both the PCNA unloading activity and the interaction with WDR48 are required to efficiently recruit RAD51 to stalled replication forks. Promotes the generation of MUS81-mediated single-stranded DNA-associated breaks in response to replication stress, which is an alternative pathway to restart stalled/regressed replication forks. The protein is ATPase family AAA domain-containing protein 5 of Homo sapiens (Human).